The primary structure comprises 582 residues: External alternative NADH-ubiquinone oxidoreductase, mitochondrial (582 aa).

The N-terminal 30 residues, 1-30 (MLRLRPAVRAVSVARSVALTRSLHVSVAKF), are a transit peptide targeting the mitochondrion. Residues 46–65 (KQTAGHQGHHQEIPKPDENH) form a disordered region. Residues 54–65 (HHQEIPKPDENH) are compositionally biased toward basic and acidic residues. 114 to 144 (TLVVLGSGWGSVSFLKKLDTSNYNVIVVSPR) lines the FAD pocket. Residue 277 to 313 (LHTVVVGGGPTGVEFAAELQDFFEDDLRKWIPDIRDD) participates in NAD(+) binding. Positions 454 to 501 (LLNGIAKTEDLNNEITNLEKQSEHTFDEQERKNIFAQLESKSRKLRRS) form a coiled coil.

It belongs to the NADH dehydrogenase family. The cofactor is FAD.

It is found in the mitochondrion inner membrane. The catalysed reaction is a quinone + NADH + H(+) = a quinol + NAD(+). The enzyme catalyses a ubiquinone + NADH + H(+) = a ubiquinol + NAD(+). In terms of biological role, alternative NADH-ubiquinone oxidoreductase which catalyzes the oxidation of mitochondrial NADH does not translocate protons across the inner mitochondrial membrane. The chain is External alternative NADH-ubiquinone oxidoreductase, mitochondrial (NDH2) from Yarrowia lipolytica (strain CLIB 122 / E 150) (Yeast).